Consider the following 168-residue polypeptide: uncharacterized protein (168 aa).

Positions 14–168 (IDIPLLDAAS…EYKHWIYVTK (155 aa)) constitute an N-acetyltransferase domain.

This sequence belongs to the acetyltransferase family.

This is an uncharacterized protein from Bacillus subtilis (strain 168).